A 406-amino-acid chain; its full sequence is Tyrosine--tRNA ligase (406 aa).

Positions 48–57 (PSRPDLHLGH) match the 'HIGH' region motif. A 'KMSKS' region motif is present at residues 232 to 236 (KMSKS). An ATP-binding site is contributed by Lys-235. In terms of domain architecture, S4 RNA-binding spans 339-401 (MPVVELLMAL…GKRKFFKVAR (63 aa)).

The protein belongs to the class-I aminoacyl-tRNA synthetase family. TyrS type 2 subfamily. Homodimer.

The protein resides in the cytoplasm. The enzyme catalyses tRNA(Tyr) + L-tyrosine + ATP = L-tyrosyl-tRNA(Tyr) + AMP + diphosphate + H(+). Its function is as follows. Catalyzes the attachment of tyrosine to tRNA(Tyr) in a two-step reaction: tyrosine is first activated by ATP to form Tyr-AMP and then transferred to the acceptor end of tRNA(Tyr). In Chlorobaculum tepidum (strain ATCC 49652 / DSM 12025 / NBRC 103806 / TLS) (Chlorobium tepidum), this protein is Tyrosine--tRNA ligase.